The following is a 147-amino-acid chain: Large ribosomal subunit protein uL15 (147 aa).

Basic residues predominate over residues 1-15 (MTDRVKKTRKLRGHV). The disordered stretch occupies residues 1 to 34 (MTDRVKKTRKLRGHVSHGYGRVGKHRKHSGGRGL).

The protein belongs to the universal ribosomal protein uL15 family.

The polypeptide is Large ribosomal subunit protein uL15 (RPL27A) (Encephalitozoon cuniculi (strain GB-M1) (Microsporidian parasite)).